The following is a 959-amino-acid chain: Translation initiation factor IF-2 (959 aa).

The segment covering 1–10 has biased composition (basic and acidic residues); the sequence is MSDKTNDDKT. The tract at residues 1-374 is disordered; sequence MSDKTNDDKT…SQMQETREKI (374 aa). Polar residues predominate over residues 27 to 37; the sequence is EQSTVRQNFSH. Low complexity-rich tracts occupy residues 63–118 and 128–138; these read AAAA…VTKP and QRPGGQQAQRP. Composition is skewed to basic and acidic residues over residues 154-225 and 232-241; these read SEMD…EAAK and ARSERRDDAR. Low complexity predominate over residues 246-284; it reads GARPQQAGRPQGGRPQPAGRPQQGSPRPAPIIADAAPIA. Basic and acidic residues predominate over residues 318–333; the sequence is PEVRAPKVVKGEDDRR. In terms of domain architecture, tr-type G spans 457-626; it reads SRPPVVTIMG…LLQAEMLDLK (170 aa). The tract at residues 466–473 is G1; the sequence is GHVDHGKT. Position 466–473 (466–473) interacts with GTP; it reads GHVDHGKT. The interval 491 to 495 is G2; the sequence is GITQH. A G3 region spans residues 512 to 515; the sequence is DTPG. Residues 512–516 and 566–569 each bind GTP; these read DTPGH and NKID. A G4 region spans residues 566-569; it reads NKID. Positions 602–604 are G5; it reads SAK.

It belongs to the TRAFAC class translation factor GTPase superfamily. Classic translation factor GTPase family. IF-2 subfamily.

The protein localises to the cytoplasm. In terms of biological role, one of the essential components for the initiation of protein synthesis. Protects formylmethionyl-tRNA from spontaneous hydrolysis and promotes its binding to the 30S ribosomal subunits. Also involved in the hydrolysis of GTP during the formation of the 70S ribosomal complex. The protein is Translation initiation factor IF-2 of Brucella canis (strain ATCC 23365 / NCTC 10854 / RM-666).